A 194-amino-acid polypeptide reads, in one-letter code: Small ribosomal subunit protein uS7 (194 aa).

This sequence belongs to the universal ribosomal protein uS7 family. Part of the 30S ribosomal subunit.

In terms of biological role, one of the primary rRNA binding proteins, it binds directly to 16S rRNA where it nucleates assembly of the head domain of the 30S subunit. Is located at the subunit interface close to the decoding center. This chain is Small ribosomal subunit protein uS7, found in Methanococcus vannielii (strain ATCC 35089 / DSM 1224 / JCM 13029 / OCM 148 / SB).